A 321-amino-acid polypeptide reads, in one-letter code: Ribonuclease Z (321 aa).

7 residues coordinate Zn(2+): histidine 62, histidine 64, aspartate 66, histidine 67, histidine 139, aspartate 209, and histidine 268. Aspartate 66 acts as the Proton acceptor in catalysis.

The protein belongs to the RNase Z family. In terms of assembly, homodimer. Zn(2+) is required as a cofactor.

It catalyses the reaction Endonucleolytic cleavage of RNA, removing extra 3' nucleotides from tRNA precursor, generating 3' termini of tRNAs. A 3'-hydroxy group is left at the tRNA terminus and a 5'-phosphoryl group is left at the trailer molecule.. Its function is as follows. Zinc phosphodiesterase, which displays some tRNA 3'-processing endonuclease activity. Probably involved in tRNA maturation, by removing a 3'-trailer from precursor tRNA. In Pseudomonas putida (strain W619), this protein is Ribonuclease Z.